Reading from the N-terminus, the 84-residue chain is Exodeoxyribonuclease 7 small subunit (84 aa).

This sequence belongs to the XseB family. In terms of assembly, heterooligomer composed of large and small subunits.

The protein resides in the cytoplasm. The enzyme catalyses Exonucleolytic cleavage in either 5'- to 3'- or 3'- to 5'-direction to yield nucleoside 5'-phosphates.. Its function is as follows. Bidirectionally degrades single-stranded DNA into large acid-insoluble oligonucleotides, which are then degraded further into small acid-soluble oligonucleotides. The polypeptide is Exodeoxyribonuclease 7 small subunit (Yersinia pseudotuberculosis serotype O:3 (strain YPIII)).